The primary structure comprises 37 residues: Bacteriocin lactococcin MMFII (37 aa).

C9 and C14 are disulfide-bonded.

It is found in the secreted. In terms of biological role, bacteriocin active against Listeria monocytogenes and Lactococcus cremoris. The protein is Bacteriocin lactococcin MMFII of Lactococcus lactis subsp. lactis (Streptococcus lactis).